Consider the following 367-residue polypeptide: Peptide chain release factor 2 (367 aa).

Residue Gln250 is modified to N5-methylglutamine.

This sequence belongs to the prokaryotic/mitochondrial release factor family. Methylated by PrmC. Methylation increases the termination efficiency of RF2.

Its subcellular location is the cytoplasm. Functionally, peptide chain release factor 2 directs the termination of translation in response to the peptide chain termination codons UGA and UAA. The polypeptide is Peptide chain release factor 2 (Kineococcus radiotolerans (strain ATCC BAA-149 / DSM 14245 / SRS30216)).